The chain runs to 226 residues: Neuromodulin (226 aa).

Positions 1-226 (MLCCMRRTKQ…EDPEADQEHA (226 aa)) are disordered. S-palmitoyl cysteine attachment occurs at residues cysteine 3 and cysteine 4. The segment covering 9 to 32 (KQVEKNDEDQKIEQDGVKPEDKAH) has biased composition (basic and acidic residues). The 30-residue stretch at 31-60 (AHKAATKIQASFRGHITRKKLKDEKKGDAP) folds into the IQ domain. Serine 41 bears the Phosphoserine; by PHK and PKC mark. The span at 51-84 (LKDEKKGDAPAAEAEAKEKDDAPVADGVEKKEGD) shows a compositional bias: basic and acidic residues. A compositionally biased stretch (low complexity) spans 85 to 97 (GSATTDAAPATSP). A phosphoserine mark is found at serine 86 and serine 96. Residues 98-127 (KAEEPSKAGDAPSEEKKGEGDAAPSEEKAG) show a composition bias toward basic and acidic residues. Residues 128-139 (SAETESAAKATT) show a composition bias toward low complexity. Phosphoserine is present on residues serine 142, serine 144, and serine 145. Positions 146–158 (KAEDGPAKEEPKQ) are enriched in basic and acidic residues. The span at 159-192 (ADVPAAVTDAAATTPAAEDAAKAAQPPTETAESS) shows a compositional bias: low complexity. At threonine 172 the chain carries Phosphothreonine. Phosphoserine occurs at positions 191 and 192. Positions 201 to 214 (VDEAKPKESARQDE) are enriched in basic and acidic residues. A compositionally biased stretch (acidic residues) spans 215-226 (GKEDPEADQEHA).

It belongs to the neuromodulin family. As to quaternary structure, identified in a complex containing FGFR4, NCAM1, CDH2, PLCG1, FRS2, SRC, SHC1, GAP43 and CTTN. Interacts (via IQ domain) with calmodulin. Binds calmodulin with a greater affinity in the absence of Ca(2+) than in its presence. Phosphorylated. Phosphorylation of this protein by a protein kinase C is specifically correlated with certain forms of synaptic plasticity. In terms of processing, palmitoylated by ZDHHC3. Palmitoylation is regulated by ARF6 and is essential for plasma membrane association and axonal and dendritic filopodia induction. Deacylated by LYPLA2. In terms of tissue distribution, expressed in hippocampal neurons, with highest levels of expression in the CA4 and CA3 neurons and lower levels in CA1 neurons. Expressed in the dorsal root ganglion.

It is found in the cell membrane. Its subcellular location is the cell projection. The protein resides in the growth cone. It localises to the growth cone membrane. The protein localises to the synapse. It is found in the filopodium membrane. Its subcellular location is the perikaryon. The protein resides in the dendrite. It localises to the axon. The protein localises to the cytoplasm. This protein is associated with nerve growth. It is a major component of the motile 'growth cones' that form the tips of elongating axons. Plays a role in axonal and dendritic filopodia induction. The sequence is that of Neuromodulin (Gap43) from Rattus norvegicus (Rat).